The sequence spans 129 residues: MESKVEQGVKNLNMENDHQEKEEKEEKPQDANKREPVVALPFEAGEYYVPRGSRRRFRVRQPIAHYRWDLMHRVGEPQGRMREENVQRFGEDMRQLMEKLRERQLSHSLRAVSTDPPHHDHHDEFCLMP.

The interval 1-38 (MESKVEQGVKNLNMENDHQEKEEKEEKPQDANKREPVV) is disordered. Residues 15 to 36 (ENDHQEKEEKEEKPQDANKREP) show a composition bias toward basic and acidic residues. Position 51 is an omega-N-methylarginine (Arg-51). Positions 108 to 129 (SLRAVSTDPPHHDHHDEFCLMP) are disordered. Basic and acidic residues predominate over residues 116 to 129 (PPHHDHHDEFCLMP). Positions 118–122 (HHDHH) are his cluster. A Zn(2+)-binding site is contributed by Cys-126.

The protein belongs to the BEX family. As to quaternary structure, interacts with LMO2, possibly leading to regulate the transcriptional activity of a DNA-binding complex containing LMO2. Interacts with OMP.

The protein localises to the nucleus. Its subcellular location is the cytoplasm. Regulator of mitochondrial apoptosis and G1 cell cycle. Regulates the level of PP2A regulatory subunit B and PP2A phosphatase activity. In absence of reductive stress, acts as a pseudosubstrate for the CRL2(FEM1B) complex: associates with FEM1B via zinc, thereby preventing association between FEM1B and its substrates. This Rattus norvegicus (Rat) protein is Protein BEX2 (Bex2).